We begin with the raw amino-acid sequence, 395 residues long: Chorismate synthase (395 aa).

This sequence belongs to the chorismate synthase family. Homotetramer. FMNH2 is required as a cofactor.

The enzyme catalyses 5-O-(1-carboxyvinyl)-3-phosphoshikimate = chorismate + phosphate. The protein operates within metabolic intermediate biosynthesis; chorismate biosynthesis; chorismate from D-erythrose 4-phosphate and phosphoenolpyruvate: step 7/7. This Schizosaccharomyces pombe (strain 972 / ATCC 24843) (Fission yeast) protein is Chorismate synthase.